A 434-amino-acid polypeptide reads, in one-letter code: Glutamyl-tRNA reductase (434 aa).

Substrate-binding positions include 54-57 (TCNR), serine 113, 118-120 (EAQ), and glutamine 124. Catalysis depends on cysteine 55, which acts as the Nucleophile. Residue 193–198 (GGGEVS) coordinates NADP(+).

The protein belongs to the glutamyl-tRNA reductase family. In terms of assembly, homodimer.

It catalyses the reaction (S)-4-amino-5-oxopentanoate + tRNA(Glu) + NADP(+) = L-glutamyl-tRNA(Glu) + NADPH + H(+). It participates in porphyrin-containing compound metabolism; protoporphyrin-IX biosynthesis; 5-aminolevulinate from L-glutamyl-tRNA(Glu): step 1/2. Its pathway is porphyrin-containing compound metabolism; chlorophyll biosynthesis. Functionally, catalyzes the NADPH-dependent reduction of glutamyl-tRNA(Glu) to glutamate 1-semialdehyde (GSA). The chain is Glutamyl-tRNA reductase from Chloroflexus aurantiacus (strain ATCC 29366 / DSM 635 / J-10-fl).